Here is a 570-residue protein sequence, read N- to C-terminus: Proline--tRNA ligase (570 aa).

The protein belongs to the class-II aminoacyl-tRNA synthetase family. ProS type 1 subfamily. In terms of assembly, homodimer.

The protein resides in the cytoplasm. It carries out the reaction tRNA(Pro) + L-proline + ATP = L-prolyl-tRNA(Pro) + AMP + diphosphate. Functionally, catalyzes the attachment of proline to tRNA(Pro) in a two-step reaction: proline is first activated by ATP to form Pro-AMP and then transferred to the acceptor end of tRNA(Pro). As ProRS can inadvertently accommodate and process non-cognate amino acids such as alanine and cysteine, to avoid such errors it has two additional distinct editing activities against alanine. One activity is designated as 'pretransfer' editing and involves the tRNA(Pro)-independent hydrolysis of activated Ala-AMP. The other activity is designated 'posttransfer' editing and involves deacylation of mischarged Ala-tRNA(Pro). The misacylated Cys-tRNA(Pro) is not edited by ProRS. The protein is Proline--tRNA ligase of Shewanella sp. (strain MR-7).